Reading from the N-terminus, the 349-residue chain is Transcriptional repressor protein KorB (349 aa).

Disordered stretches follow at residues 1–72 (MSAK…SPES) and 246–296 (RSHD…DKLK). Residues 25 to 40 (LGDLAGLLNEQPAANA) show a composition bias toward low complexity. Composition is skewed to basic and acidic residues over residues 246–256 (RSHDDGDRDPN) and 279–296 (DDAK…DKLK).

This sequence belongs to the ParB family.

In terms of biological role, in conjunction with KorA, inhibits the transcription of the kilA, trfA and korAB operons. Is also involved in the negative control of the kilB operon. The chain is Transcriptional repressor protein KorB (korB) from Escherichia coli.